Reading from the N-terminus, the 31-residue chain is Photosystem I reaction center subunit XII (31 aa).

The chain crosses the membrane as a helical span at residues 7–26 (QIFIALLTALIPAFFALKLG).

Belongs to the PsaM family.

It localises to the plastid. Its subcellular location is the chloroplast thylakoid membrane. The protein is Photosystem I reaction center subunit XII of Euglena granulata.